The primary structure comprises 245 residues: Carboxy-S-adenosyl-L-methionine synthase (245 aa).

Residues Tyr-42, 67-69, 92-93, 120-121, Asn-135, and Arg-202 contribute to the S-adenosyl-L-methionine site; these read GCS, DN, and DI.

Belongs to the class I-like SAM-binding methyltransferase superfamily. Cx-SAM synthase family. As to quaternary structure, homodimer.

It carries out the reaction prephenate + S-adenosyl-L-methionine = carboxy-S-adenosyl-L-methionine + 3-phenylpyruvate + H2O. Functionally, catalyzes the conversion of S-adenosyl-L-methionine (SAM) to carboxy-S-adenosyl-L-methionine (Cx-SAM). This chain is Carboxy-S-adenosyl-L-methionine synthase, found in Vibrio parahaemolyticus serotype O3:K6 (strain RIMD 2210633).